The sequence spans 317 residues: Glycine--tRNA ligase alpha subunit (317 aa).

It belongs to the class-II aminoacyl-tRNA synthetase family. In terms of assembly, tetramer of two alpha and two beta subunits.

The protein localises to the cytoplasm. The enzyme catalyses tRNA(Gly) + glycine + ATP = glycyl-tRNA(Gly) + AMP + diphosphate. This is Glycine--tRNA ligase alpha subunit from Leptothrix cholodnii (strain ATCC 51168 / LMG 8142 / SP-6) (Leptothrix discophora (strain SP-6)).